Consider the following 62-residue polypeptide: DNA-binding protein 7 (62 aa).

This sequence belongs to the 7 kDa DNA-binding/endoribonuclease P2 family. As to quaternary structure, monomer.

The protein resides in the cytoplasm. Can constrain negative DNA supercoils. May be involved in maintaining the integrity of the genome at high temperature. The protein is DNA-binding protein 7 of Metallosphaera cuprina (strain Ar-4).